The chain runs to 123 residues: Immunoglobulin lambda variable 5-45 (123 aa).

The signal sequence occupies residues 1–19 (MAWTPLLLLFLSHCTGSLS). The framework-1 stretch occupies residues 20 to 44 (QAVLTQPSSLSASPGASASLTCTLC). The region spanning 20–123 (QAVLTQPSSL…YCMIWHSSAS (104 aa)) is the Ig-like domain. A disulfide bridge links Cys-41 with Cys-115. Residues 45–53 (SGINVGTYR) are complementarity-determining-1. Residues 54–70 (IYWYQQKPGSPPQYLLR) are framework-2. The tract at residues 68–92 (LLRYKSDSDKQQGSGVPSRFSGSKD) is disordered. The interval 71-77 (YKSDSDK) is complementarity-determining-2. The span at 78–92 (QQGSGVPSRFSGSKD) shows a compositional bias: polar residues. Positions 78–115 (QQGSGVPSRFSGSKDASANAGILLISGLQSEDEADYYC) are framework-3. A complementarity-determining-3 region spans residues 116-123 (MIWHSSAS).

Immunoglobulins are composed of two identical heavy chains and two identical light chains; disulfide-linked.

Its subcellular location is the secreted. It localises to the cell membrane. In terms of biological role, v region of the variable domain of immunoglobulin light chains that participates in the antigen recognition. Immunoglobulins, also known as antibodies, are membrane-bound or secreted glycoproteins produced by B lymphocytes. In the recognition phase of humoral immunity, the membrane-bound immunoglobulins serve as receptors which, upon binding of a specific antigen, trigger the clonal expansion and differentiation of B lymphocytes into immunoglobulins-secreting plasma cells. Secreted immunoglobulins mediate the effector phase of humoral immunity, which results in the elimination of bound antigens. The antigen binding site is formed by the variable domain of one heavy chain, together with that of its associated light chain. Thus, each immunoglobulin has two antigen binding sites with remarkable affinity for a particular antigen. The variable domains are assembled by a process called V-(D)-J rearrangement and can then be subjected to somatic hypermutations which, after exposure to antigen and selection, allow affinity maturation for a particular antigen. The sequence is that of Immunoglobulin lambda variable 5-45 from Homo sapiens (Human).